The primary structure comprises 120 residues: Ribosome-binding factor A (120 aa).

The protein belongs to the RbfA family. In terms of assembly, monomer. Binds 30S ribosomal subunits, but not 50S ribosomal subunits or 70S ribosomes.

It localises to the cytoplasm. In terms of biological role, one of several proteins that assist in the late maturation steps of the functional core of the 30S ribosomal subunit. Associates with free 30S ribosomal subunits (but not with 30S subunits that are part of 70S ribosomes or polysomes). Required for efficient processing of 16S rRNA. May interact with the 5'-terminal helix region of 16S rRNA. The polypeptide is Ribosome-binding factor A (Chlamydia caviae (strain ATCC VR-813 / DSM 19441 / 03DC25 / GPIC) (Chlamydophila caviae)).